The sequence spans 421 residues: Histidine--tRNA ligase (421 aa).

The protein belongs to the class-II aminoacyl-tRNA synthetase family. In terms of assembly, homodimer.

The protein resides in the cytoplasm. The enzyme catalyses tRNA(His) + L-histidine + ATP = L-histidyl-tRNA(His) + AMP + diphosphate + H(+). This chain is Histidine--tRNA ligase, found in Francisella tularensis subsp. holarctica (strain FTNF002-00 / FTA).